The following is a 215-amino-acid chain: Lysozyme-like protein 5 (215 aa).

The first 17 residues, 1–17 (MKHFFITILLFCSVVSA), serve as a signal peptide directing secretion. Positions 18-215 (ARNGIDINSP…GVSVDMNYIP (198 aa)) constitute a Ch-type lysozyme domain. Residues Asp-23, Asp-113, and Glu-115 contribute to the active site.

It belongs to the glycosyl hydrolase 25 family.

Its function is as follows. Plays a role in resistance to Gram-positive bacteria S.aureus or B.thuringiensis infection. This chain is Lysozyme-like protein 5, found in Caenorhabditis elegans.